Consider the following 829-residue polypeptide: MDYKYAPKRIEKKWQEHWEREKLFEVSEIPGREKFYLLEMFPYPSGRIHMGHVRNYSIGDVVARFLRMRGYNVLHPMGWDAFGMPAENAAIKAKTHPARWTYENIAYMRSQLKQLGFSYDWSREFATCDVSYYRWEQLFFLKMYEKGLAYKRSAYVNWCGTCLTVLANEQVEGGACWRCDQPVVQKEMEQWFFKITDYVEELLDYTHRLPGWPERVLTMQQNWIGKSLGSKLLFPLASGDGSITVFTTRADTLFGATFMSLAPEHPLVEGLCRGNPQESEVLRFVQAAKQAKRNDREAELLEKEGVFTGSCCINPVTGAKMPIYVANFVVMEYGTGAVMAVPAHDQRDFEFARKYGLPVKVVIKPADAAAAPAAQELSAAFEDDGVLVDSGAYSGMASAEARTAITADLAGKGLGEQTVQYRLRDWGISRQRYWGAPIPIVYCDKCGTVPVPEKDLPVVLPTDVALLPNGASPLPAHAPFLNTDCPRCGGPARRETDTMDTFVESSWYFARFACARYDQGPLDLPKVKYWMPVDQYIGGIEHAVLHLLYSRFFVKVLRDMGALEVDEPFRNLLTQGMVIKDGAKMSKSKGNVVDPDDMIKAYGADTVRLFCLFASPPEKDLEWSDQGVEGSFRFLSRIWRLVSDNLDALRSAPRHNGGGALPEPLEALHRKTHQTIKKVTEDIRDRFHFNTAIAAIMELVNQIYQVVEGGSRAGNIWPVVKEAVEALILLVSPMAPHIAEEIWHELGHTRSVLLEPWPEWSGKALQAEEVMLVVQVNGRLRSRITVPSDATPEQMEAAALADSRVQEFIAGKPVRKVVVVPKKIINVVV.

Positions 42 to 52 match the 'HIGH' region motif; the sequence is PYPSGRIHMGH. The short motif at 584–588 is the 'KMSKS' region element; that stretch reads KMSKS. Position 587 (Lys587) interacts with ATP.

This sequence belongs to the class-I aminoacyl-tRNA synthetase family.

It is found in the cytoplasm. The catalysed reaction is tRNA(Leu) + L-leucine + ATP = L-leucyl-tRNA(Leu) + AMP + diphosphate. The polypeptide is Leucine--tRNA ligase (Syntrophobacter fumaroxidans (strain DSM 10017 / MPOB)).